We begin with the raw amino-acid sequence, 504 residues long: Glutamate--tRNA ligase (504 aa).

Positions 27–37 match the 'HIGH' region motif; the sequence is PSPTGTPHVGL. The 'KMSKS' region signature appears at 271–275; the sequence is KLSKR. Lysine 274 provides a ligand contact to ATP.

The protein belongs to the class-I aminoacyl-tRNA synthetase family. Glutamate--tRNA ligase type 1 subfamily. As to quaternary structure, monomer.

The protein localises to the cytoplasm. The catalysed reaction is tRNA(Glu) + L-glutamate + ATP = L-glutamyl-tRNA(Glu) + AMP + diphosphate. Catalyzes the attachment of glutamate to tRNA(Glu) in a two-step reaction: glutamate is first activated by ATP to form Glu-AMP and then transferred to the acceptor end of tRNA(Glu). This chain is Glutamate--tRNA ligase, found in Arthrobacter sp. (strain FB24).